Consider the following 279-residue polypeptide: Dehydrogenase/reductase SDR family member 4 (279 aa).

37–61 (LVTASTDGIGFAIARRLAQDGAHVV) contacts NADP(+). At K93 the chain carries N6-acetyllysine; alternate. Residue K93 is modified to N6-succinyllysine; alternate. Position 106 is an N6-acetyllysine (K106). S170 contributes to the substrate binding site. Y183 functions as the Proton acceptor in the catalytic mechanism. K187 serves as a coordination point for NADP(+). At S221 the chain carries Phosphoserine. K235 carries the post-translational modification N6-succinyllysine. A Peroxisomal targeting signal motif is present at residues 277-279 (SHL).

It belongs to the short-chain dehydrogenases/reductases (SDR) family. In terms of assembly, homotetramer.

Its subcellular location is the peroxisome. It carries out the reaction a secondary alcohol + NADP(+) = a ketone + NADPH + H(+). It catalyses the reaction 3alpha-hydroxy-5beta-pregnan-20-one + NADP(+) = 5beta-pregnan-3,20-dione + NADPH + H(+). The catalysed reaction is 5beta-dihydrotestosterone + NADPH + H(+) = 5beta-androstane-3alpha,17beta-diol + NADP(+). The enzyme catalyses all-trans-retinol + NADP(+) = all-trans-retinal + NADPH + H(+). It carries out the reaction isatin + NADPH + H(+) = 3-hydroxyindolin-2-one + NADP(+). NADPH-dependent oxidoreductase which catalyzes the reduction of a variety of compounds bearing carbonyl groups including ketosteroids, alpha-dicarbonyl compounds, aldehydes, aromatic ketones and quinones. Reduces all-trans-retinal and 9-cis retinal. Reduces 3-ketosteroids and benzil into 3alpha-hydroxysteroids and S-benzoin, respectively, in contrast to the stereoselectivity of primates DHRS4s which produce 3beta-hydroxysteroids and R-benzoin. In the reverse reaction, catalyzes the NADP-dependent oxidation of 3alpha-hydroxysteroids and alcohol, but with much lower efficiency. Involved in the metabolism of 3alpha-hydroxysteroids, retinoid, isatin and xenobiotic carbonyl compounds. In Bos taurus (Bovine), this protein is Dehydrogenase/reductase SDR family member 4 (DHRS4).